We begin with the raw amino-acid sequence, 96 residues long: MNIRPLHDKVILKREDVETKSAGGIVLTGSAATKSTRAKVLAVGPGRLLENGSVHPMHVKVGDTVIFSDGYGVKTEKIDGEEVLIISESDILAIVE.

It belongs to the GroES chaperonin family. In terms of assembly, heptamer of 7 subunits arranged in a ring. Interacts with the chaperonin GroEL.

The protein resides in the cytoplasm. Together with the chaperonin GroEL, plays an essential role in assisting protein folding. The GroEL-GroES system forms a nano-cage that allows encapsulation of the non-native substrate proteins and provides a physical environment optimized to promote and accelerate protein folding. GroES binds to the apical surface of the GroEL ring, thereby capping the opening of the GroEL channel. The protein is Co-chaperonin GroES of Aggregatibacter actinomycetemcomitans (Actinobacillus actinomycetemcomitans).